The following is a 283-amino-acid chain: GTPase Era (283 aa).

The region spanning 7 to 175 is the Era-type G domain; the sequence is YCGHVIIVGK…KNIIKSYLPE (169 aa). The tract at residues 15-22 is G1; that stretch reads GKANVGKS. GTP is bound at residue 15-22; that stretch reads GKANVGKS. Positions 41–45 are G2; that stretch reads NTTQS. The tract at residues 62 to 65 is G3; sequence DTPG. GTP contacts are provided by residues 62 to 66 and 124 to 127; these read DTPGV and NKID. Residues 124-127 form a G4 region; sequence NKID. Residues 154–156 form a G5 region; it reads ISA. The KH type-2 domain occupies 198–283; that stretch reads IREQLILFLG…HLVLWVKDKN (86 aa).

The protein belongs to the TRAFAC class TrmE-Era-EngA-EngB-Septin-like GTPase superfamily. Era GTPase family. In terms of assembly, monomer.

It is found in the cytoplasm. The protein resides in the cell membrane. In terms of biological role, an essential GTPase that binds both GDP and GTP, with rapid nucleotide exchange. Plays a role in 16S rRNA processing and 30S ribosomal subunit biogenesis and possibly also in cell cycle regulation and energy metabolism. This chain is GTPase Era, found in Buchnera aphidicola subsp. Acyrthosiphon pisum (strain APS) (Acyrthosiphon pisum symbiotic bacterium).